The following is a 217-amino-acid chain: Large ribosomal subunit protein uL1 (217 aa).

N-acetylserine is present on serine 2. Residue tyrosine 11 is modified to Phosphotyrosine. 2 positions are modified to N6-acetyllysine: lysine 91 and lysine 106. An N6-acetyllysine; alternate modification is found at lysine 118. Residue lysine 118 forms a Glycyl lysine isopeptide (Lys-Gly) (interchain with G-Cter in SUMO1); alternate linkage. Lysine 118 is covalently cross-linked (Glycyl lysine isopeptide (Lys-Gly) (interchain with G-Cter in SUMO2); alternate).

This sequence belongs to the universal ribosomal protein uL1 family. As to quaternary structure, component of the large ribosomal subunit.

Its subcellular location is the cytoplasm. Functionally, component of the large ribosomal subunit. The ribosome is a large ribonucleoprotein complex responsible for the synthesis of proteins in the cell. The polypeptide is Large ribosomal subunit protein uL1 (RPL10A) (Macaca fascicularis (Crab-eating macaque)).